We begin with the raw amino-acid sequence, 247 residues long: Submandibular gland secretory Glx-rich protein CB (247 aa).

Residues 1–18 (MLVVLLTAALLALSSAQG) form the signal peptide. A disordered region spans residues 14-219 (SSAQGTDEEV…PQHYRGRPPK (206 aa)). Composition is skewed to low complexity over residues 39-50 (PVDSGSDPPSAD), 58-71 (EGESAPPANEEPPA), 81-93 (QQEPTQAENQEPP), 104-116 (QQEPTQAENQEPP), 126-139 (QQQQPTQAENQEPP), 150-159 (QQESTQAENQ), and 178-196 (VESPPSSPENSQEQPQQTN). Repeat copies occupy residues 67 to 89 (EEPPATSGSEEEQQQQEPTQAEN), 90 to 112 (QEPPATSGSEEEQQQQEPTQAEN), 113 to 135 (QEPPATSGSEEEQQQQQPTQAEN), 136 to 158 (QEPPATSGSEEEQQQQESTQAEN), and 159 to 181 (QEPSDSAGEGQETQPEEGNVESP). The interval 67–181 (EEPPATSGSE…QPEEGNVESP (115 aa)) is 5 X 23 AA tandem repeats. Over residues 197–212 (PEEKPPAPKTQEEPQH) the composition is skewed to basic and acidic residues.

As to expression, submandibular gland acinar cells.

The protein localises to the secreted. Its function is as follows. GRP proteins have a marked affinity for hydroxyapatite. They may play a role in the formation of the protective acquired pellicle at the saliva-tooth interface. This is Submandibular gland secretory Glx-rich protein CB (Grpcb) from Rattus norvegicus (Rat).